A 330-amino-acid polypeptide reads, in one-letter code: LIM domain-containing protein pin-2 (330 aa).

5 LIM zinc-binding domains span residues 21–73 (CERC…CEHD), 82–132 (CAKC…CFLC), 144–194 (CNKC…CPRC), 202–255 (CFDC…CRDD), and 264–315 (CFIC…CKKC).

As to expression, expressed in neurons and intestine.

Its subcellular location is the cytoplasm. It is found in the nucleus. The polypeptide is LIM domain-containing protein pin-2 (pin-2) (Caenorhabditis elegans).